A 247-amino-acid polypeptide reads, in one-letter code: Protein lin-28 homolog B (247 aa).

The tract at residues 1-22 (MAEGGASKGEEPEKLPGLAEDE) is disordered. The CSD domain occupies 27–100 (HGTGHCKWFN…GLESIRVTGP (74 aa)). Phosphoserine occurs at positions 94, 103, and 108. The tract at residues 96–124 (RVTGPGGSPCLGSERRPKGKTLQKRKPKG) is disordered. The span at 112–123 (PKGKTLQKRKPK) shows a compositional bias: basic residues. 2 consecutive CCHC-type zinc fingers follow at residues 125–142 (DRCY…ECSL) and 147–164 (KKCH…NCPH). Zn(2+)-binding residues include C127, C130, H135, C140, C149, C152, H157, and C162. Polar residues predominate over residues 173–186 (SSQGRQEAESQPCS). The segment at 173-247 (SSQGRQEAES…GPLIQKRKKT (75 aa)) is disordered. A compositionally biased stretch (basic and acidic residues) spans 207–219 (VKSEMAEHSDRSP).

This sequence belongs to the lin-28 family.

The protein resides in the nucleus. The protein localises to the nucleolus. Suppressor of microRNA (miRNA) biogenesis, including that of let-7 and possibly of miR107, miR-143 and miR-200c. Binds primary let-7 transcripts (pri-let-7), including pri-let-7g and pri-let-7a-1, and sequester them in the nucleolus, away from the microprocessor complex, hence preventing their processing into mature miRNA. Does not act on pri-miR21. The repression of let-7 expression is required for normal development and contributes to maintain the pluripotent state of embryonic stem cells by preventing let-7-mediated differentiation. When overexpressed, recruits ZCCHC11/TUT4 uridylyltransferase to pre-let-7 transcripts, leading to their terminal uridylation and degradation. This activity might not be relevant in vivo, as LIN28B-mediated inhibition of let-7 miRNA maturation appears to be ZCCHC11-independent. Interaction with target pre-miRNAs occurs via an 5'-GGAG-3' motif in the pre-miRNA terminal loop. Mediates MYC-induced let-7 repression. When overexpressed, may stimulate growth of carcinoma cell lines. This is Protein lin-28 homolog B (Lin28b) from Mus musculus (Mouse).